We begin with the raw amino-acid sequence, 50 residues long: Defensin D1 (50 aa).

Cystine bridges form between C3-C50, C14-C35, C20-C44, and C24-C46.

Contains 4 disulfide bonds.

It is found in the secreted. Its function is as follows. Antimicrobial peptide active against fungi, Gram-positive and Gram-negative bacteria. Inhibits growth of hyphae in the fungi A.niger (IC(50)=3.5 ug/ml), B.sorokiniana (IC(50)=3.0 ug/ml), F.oxysporum (IC(50)=9.5 ug/ml), F.graminearum (IC(50)=6.9 ug/ml), F.culmorum (IC(50)=6.9 ug/ml) and B.cinerea (IC(50)=27.4 ug/ml). Has no effect on spore germination. Destroys spores in germinated conidia by disruption of cell walls and membranes in A.niger and B.sorokiniana. Causes vacuolization of germinated macro- and microconidia in F.oxysporum, F.graminearum and F.culmorum. Strongly inhibits growth of P.infestans on potato tubers above concentrations of 13.6 ug/ml. Inhibits growth of Gram-positive bacteria C.michiganensis and B.subtilis and of Gram-negative bacteria P.syringae, E.carotovora and E.coli. The protein is Defensin D1 of Nigella sativa (Black cumin).